A 409-amino-acid chain; its full sequence is LL-diaminopimelate aminotransferase (409 aa).

The substrate site is built by Tyr-15 and Gly-42. Pyridoxal 5'-phosphate is bound by residues Tyr-72, Ala-108–Lys-109, Tyr-132, Asn-186, Tyr-217, and Ser-245–Ser-247. Substrate-binding residues include Lys-109, Tyr-132, and Asn-186. Residue Lys-248 is modified to N6-(pyridoxal phosphate)lysine. Pyridoxal 5'-phosphate is bound by residues Arg-256 and Asn-291. 2 residues coordinate substrate: Asn-291 and Arg-385.

The protein belongs to the class-I pyridoxal-phosphate-dependent aminotransferase family. LL-diaminopimelate aminotransferase subfamily. As to quaternary structure, homodimer. It depends on pyridoxal 5'-phosphate as a cofactor.

It carries out the reaction (2S,6S)-2,6-diaminopimelate + 2-oxoglutarate = (S)-2,3,4,5-tetrahydrodipicolinate + L-glutamate + H2O + H(+). The protein operates within amino-acid biosynthesis; L-lysine biosynthesis via DAP pathway; LL-2,6-diaminopimelate from (S)-tetrahydrodipicolinate (aminotransferase route): step 1/1. Involved in the synthesis of meso-diaminopimelate (m-DAP or DL-DAP), required for both lysine and peptidoglycan biosynthesis. Catalyzes the direct conversion of tetrahydrodipicolinate to LL-diaminopimelate. The sequence is that of LL-diaminopimelate aminotransferase from Desulfosudis oleivorans (strain DSM 6200 / JCM 39069 / Hxd3) (Desulfococcus oleovorans).